The following is a 548-amino-acid chain: Membrane protein insertase YidC (548 aa).

The chain crosses the membrane as a helical span at residues 6-26; the sequence is NLLVIALLFVSFMIWQAWEQD. Positions 28–55 are disordered; sequence NPQPQAQQTTQTTTTAAGSAADQGVPAS. The span at 30–50 shows a compositional bias: low complexity; it reads QPQAQQTTQTTTTAAGSAADQ. The next 4 helical transmembrane spans lie at 350-370, 420-440, 458-478, and 499-519; these read FVGNWGFSIIIITFIVRGIMY, LGGCFPLLIQMPIFLALYYML, LSAQDPYYILPILMGVTMFFI, and PVIFTVFFLWFPSGLVLYYIV.

The protein belongs to the OXA1/ALB3/YidC family. Type 1 subfamily. Interacts with the Sec translocase complex via SecD. Specifically interacts with transmembrane segments of nascent integral membrane proteins during membrane integration.

It is found in the cell inner membrane. Its function is as follows. Required for the insertion and/or proper folding and/or complex formation of integral membrane proteins into the membrane. Involved in integration of membrane proteins that insert both dependently and independently of the Sec translocase complex, as well as at least some lipoproteins. Aids folding of multispanning membrane proteins. The polypeptide is Membrane protein insertase YidC (Escherichia coli O139:H28 (strain E24377A / ETEC)).